The sequence spans 176 residues: Xanthine-guanine phosphoribosyltransferase (176 aa).

Residues R51–G52, R88, and D111–T119 each bind 5-phospho-alpha-D-ribose 1-diphosphate. R88 provides a ligand contact to GMP. D112 provides a ligand contact to Mg(2+). The guanine site is built by D115 and I158. 2 residues coordinate xanthine: D115 and I158. GMP is bound by residues D115–T119 and W157–I158.

The protein belongs to the purine/pyrimidine phosphoribosyltransferase family. XGPT subfamily. As to quaternary structure, homotetramer. Requires Mg(2+) as cofactor.

The protein resides in the cell inner membrane. It carries out the reaction GMP + diphosphate = guanine + 5-phospho-alpha-D-ribose 1-diphosphate. It catalyses the reaction XMP + diphosphate = xanthine + 5-phospho-alpha-D-ribose 1-diphosphate. The enzyme catalyses IMP + diphosphate = hypoxanthine + 5-phospho-alpha-D-ribose 1-diphosphate. Its pathway is purine metabolism; GMP biosynthesis via salvage pathway; GMP from guanine: step 1/1. It functions in the pathway purine metabolism; XMP biosynthesis via salvage pathway; XMP from xanthine: step 1/1. Its function is as follows. Purine salvage pathway enzyme that catalyzes the transfer of the ribosyl-5-phosphate group from 5-phospho-alpha-D-ribose 1-diphosphate (PRPP) to the N9 position of the 6-oxopurines guanine and xanthine to form the corresponding ribonucleotides GMP (guanosine 5'-monophosphate) and XMP (xanthosine 5'-monophosphate), with the release of PPi. To a lesser extent, also acts on hypoxanthine. The polypeptide is Xanthine-guanine phosphoribosyltransferase (Roseobacter denitrificans (strain ATCC 33942 / OCh 114) (Erythrobacter sp. (strain OCh 114))).